Consider the following 201-residue polypeptide: Large ribosomal subunit protein bL25 (201 aa).

The protein belongs to the bacterial ribosomal protein bL25 family. CTC subfamily. In terms of assembly, part of the 50S ribosomal subunit; part of the 5S rRNA/L5/L18/L25 subcomplex. Contacts the 5S rRNA. Binds to the 5S rRNA independently of L5 and L18.

This is one of the proteins that binds to the 5S RNA in the ribosome where it forms part of the central protuberance. The sequence is that of Large ribosomal subunit protein bL25 from Burkholderia vietnamiensis (strain G4 / LMG 22486) (Burkholderia cepacia (strain R1808)).